We begin with the raw amino-acid sequence, 31 residues long: Kappa-sparatoxin-Hv1c (31 aa).

3 disulfides stabilise this stretch: C2-C16, C9-C21, and C15-C25. W31 carries the post-translational modification Tryptophan amide.

Expressed by the venom gland.

It localises to the secreted. Its function is as follows. Blocks transient outward voltage-gated potassium channels in rat ventricular myocytes (thus prolonging action-potential duration) and rat Kv4.2/KCNA4 channels expressed in Xenopus oocytes. Is also a weak blocker of calcium channels in rat cerebellar granule cells. The polypeptide is Kappa-sparatoxin-Hv1c (Heteropoda venatoria (Brown huntsman spider)).